The following is a 114-amino-acid chain: MPRATSDAKLLIQSLGKAYAATPTNLKIIDLYVVFAVATALIQVVYMGIVGSFPFNSFLSGVLSCIGTAVLAVCLRIQVNKDNKEFKDLPPERAFADFVLCNLVLHLVIMNFLG.

At 1 to 30 (MPRATSDAKLLIQSLGKAYAATPTNLKIID) the chain is on the cytoplasmic side. The helical transmembrane segment at 31–51 (LYVVFAVATALIQVVYMGIVG) threads the bilayer. The Lumenal segment spans residues 52-54 (SFP). The helical transmembrane segment at 55 to 75 (FNSFLSGVLSCIGTAVLAVCL) threads the bilayer. Over 76-93 (RIQVNKDNKEFKDLPPER) the chain is Cytoplasmic. A helical transmembrane segment spans residues 94-114 (AFADFVLCNLVLHLVIMNFLG).

This sequence belongs to the DAD/OST2 family. As to quaternary structure, component of the oligosaccharyltransferase (OST) complex.

The protein resides in the endoplasmic reticulum membrane. It participates in protein modification; protein glycosylation. Its function is as follows. Subunit of the oligosaccharyl transferase (OST) complex that catalyzes the initial transfer of a defined glycan (Glc(3)Man(9)GlcNAc(2) in eukaryotes) from the lipid carrier dolichol-pyrophosphate to an asparagine residue within an Asn-X-Ser/Thr consensus motif in nascent polypeptide chains, the first step in protein N-glycosylation. N-glycosylation occurs cotranslationally and the complex associates with the Sec61 complex at the channel-forming translocon complex that mediates protein translocation across the endoplasmic reticulum (ER). All subunits are required for a maximal enzyme activity. This Oryza sativa subsp. indica (Rice) protein is Dolichyl-diphosphooligosaccharide--protein glycosyltransferase subunit DAD1 (DAD1).